The following is a 434-amino-acid chain: ATP-dependent protease ATPase subunit HslU (434 aa).

Residues Ile-18, 60–65, Asp-247, Glu-312, and Arg-384 each bind ATP; that span reads GVGKTE.

The protein belongs to the ClpX chaperone family. HslU subfamily. A double ring-shaped homohexamer of HslV is capped on each side by a ring-shaped HslU homohexamer. The assembly of the HslU/HslV complex is dependent on binding of ATP.

The protein resides in the cytoplasm. Functionally, ATPase subunit of a proteasome-like degradation complex; this subunit has chaperone activity. The binding of ATP and its subsequent hydrolysis by HslU are essential for unfolding of protein substrates subsequently hydrolyzed by HslV. HslU recognizes the N-terminal part of its protein substrates and unfolds these before they are guided to HslV for hydrolysis. The protein is ATP-dependent protease ATPase subunit HslU of Brucella suis (strain ATCC 23445 / NCTC 10510).